Consider the following 132-residue polypeptide: Fatty acid-binding protein, intestinal (132 aa).

Alanine 2 carries the post-translational modification N-acetylalanine. Hexadecanoate is bound by residues tryptophan 83 and arginine 107. Tetradecanoate contacts are provided by tryptophan 83 and arginine 107.

Belongs to the calycin superfamily. Fatty-acid binding protein (FABP) family.

Its subcellular location is the cytoplasm. In terms of biological role, FABPs are thought to play a role in the intracellular transport of long-chain fatty acids and their acyl-CoA esters. FABP2 is probably involved in triglyceride-rich lipoprotein synthesis. Binds saturated long-chain fatty acids with a high affinity, but binds with a lower affinity to unsaturated long-chain fatty acids. FABP2 may also help maintain energy homeostasis by functioning as a lipid sensor. In Bos taurus (Bovine), this protein is Fatty acid-binding protein, intestinal (FABP2).